The chain runs to 79 residues: Neurotoxin ShK-like1 (79 aa).

The signal sequence occupies residues 1–25 (MSRKLLAVLMVCTFFLIAASMGTNA). A propeptide spanning residues 26–35 (LPFHEGIERR) is cleaved from the precursor. The ShKT domain occupies 39–78 (CVDKMPFVCMRKDIPAICKNRNHRSYAFIMDVCRKTCGQC). 3 disulfides stabilise this stretch: C39-C78, C47-C71, and C56-C75.

Expressed in nematocytes (in planulae and primary polyps). Is localized predominantly in the body column nematocytes and not in the tentacles (in primary polyps).

It is found in the nematocyst. It localises to the secreted. Its function is as follows. Neurotoxin. In vivo, induces contraction paralysis followed by death (within 2 hours) on zebrafish larvae. Also induces body contraction in Nematostella 11-dpf polyps. The sequence is that of Neurotoxin ShK-like1 from Nematostella vectensis (Starlet sea anemone).